A 183-amino-acid polypeptide reads, in one-letter code: Adenine phosphoribosyltransferase (183 aa).

This sequence belongs to the purine/pyrimidine phosphoribosyltransferase family. As to quaternary structure, homodimer.

It localises to the cytoplasm. It carries out the reaction AMP + diphosphate = 5-phospho-alpha-D-ribose 1-diphosphate + adenine. It participates in purine metabolism; AMP biosynthesis via salvage pathway; AMP from adenine: step 1/1. Catalyzes a salvage reaction resulting in the formation of AMP, that is energically less costly than de novo synthesis. This Corynebacterium kroppenstedtii (strain DSM 44385 / JCM 11950 / CIP 105744 / CCUG 35717) protein is Adenine phosphoribosyltransferase.